The following is a 257-amino-acid chain: Imidazole glycerol phosphate synthase subunit HisF (257 aa).

Residues aspartate 12 and aspartate 131 contribute to the active site.

It belongs to the HisA/HisF family. Heterodimer of HisH and HisF.

Its subcellular location is the cytoplasm. It catalyses the reaction 5-[(5-phospho-1-deoxy-D-ribulos-1-ylimino)methylamino]-1-(5-phospho-beta-D-ribosyl)imidazole-4-carboxamide + L-glutamine = D-erythro-1-(imidazol-4-yl)glycerol 3-phosphate + 5-amino-1-(5-phospho-beta-D-ribosyl)imidazole-4-carboxamide + L-glutamate + H(+). The protein operates within amino-acid biosynthesis; L-histidine biosynthesis; L-histidine from 5-phospho-alpha-D-ribose 1-diphosphate: step 5/9. Functionally, IGPS catalyzes the conversion of PRFAR and glutamine to IGP, AICAR and glutamate. The HisF subunit catalyzes the cyclization activity that produces IGP and AICAR from PRFAR using the ammonia provided by the HisH subunit. The polypeptide is Imidazole glycerol phosphate synthase subunit HisF (Kineococcus radiotolerans (strain ATCC BAA-149 / DSM 14245 / SRS30216)).